The chain runs to 131 residues: Cytochrome b5 (131 aa).

A Cytochrome b5 heme-binding domain is found at alanine 3–aspartate 79. Positions 38 and 62 each coordinate heme. A helical membrane pass occupies residues isoleucine 108 to isoleucine 125.

It belongs to the cytochrome b5 family.

The protein localises to the endoplasmic reticulum membrane. The protein resides in the microsome membrane. Its function is as follows. Membrane bound hemoprotein which function as an electron carrier for several membrane bound oxygenases. The polypeptide is Cytochrome b5 (Rhizopus stolonifer (Rhizopus nigricans)).